A 132-amino-acid polypeptide reads, in one-letter code: Replication enhancer protein (132 aa).

It belongs to the geminiviridae replication enhancer protein family. In terms of assembly, homooligomer. Interacts with the replication-associated protein (REP). Interacts with host proliferating cell nuclear antigen (PCNA). Interacts with host retinoblastoma-related protein 1 (RBR1), and may thereby deregulate the host cell cycle. Oligomerization and interaction with PCNA are necessary for optimal replication enhancement.

Functionally, increases viral DNA accumulation. Enhances infectivity and symptom expression. The sequence is that of Replication enhancer protein from Potato yellow mosaic virus (isolate Venezuela) (PYMV).